Here is a 280-residue protein sequence, read N- to C-terminus: Diaminopimelate epimerase (280 aa).

Positions 13 and 67 each coordinate substrate. Catalysis depends on Cys-76, which acts as the Proton donor. Substrate-binding positions include 77–78, Asn-191, and 208–209; these read GN and ER. Cys-218 serves as the catalytic Proton acceptor. 219–220 serves as a coordination point for substrate; that stretch reads GT.

The protein belongs to the diaminopimelate epimerase family. Homodimer.

It localises to the cytoplasm. The enzyme catalyses (2S,6S)-2,6-diaminopimelate = meso-2,6-diaminopimelate. It functions in the pathway amino-acid biosynthesis; L-lysine biosynthesis via DAP pathway; DL-2,6-diaminopimelate from LL-2,6-diaminopimelate: step 1/1. Functionally, catalyzes the stereoinversion of LL-2,6-diaminopimelate (L,L-DAP) to meso-diaminopimelate (meso-DAP), a precursor of L-lysine. This chain is Diaminopimelate epimerase, found in Archaeoglobus fulgidus (strain ATCC 49558 / DSM 4304 / JCM 9628 / NBRC 100126 / VC-16).